The primary structure comprises 82 residues: Protein Vpu (82 aa).

Residues 1 to 7 (MQPIPIV) lie on the Extracellular side of the membrane. The chain crosses the membrane as a helical span at residues 8-28 (AIVALVVAIIIAIVVWSIVII). The Cytoplasmic portion of the chain corresponds to 29-82 (EYRKILRQRKIDRLIDRLIERAEDSGNESEGEISALVEMGVEMGHHAPWDVDDL). Phosphoserine; by host CK2 is present on residues Ser53 and Ser57.

The protein belongs to the HIV-1 VPU protein family. Homopentamer. Interacts with host CD4 and BRTC; these interactions induce proteasomal degradation of CD4. Interacts (via transmembrane region) with host BST2 (via transmembrane region); this interaction leads to the degradation of host BST2. Interacts with host FBXW11. Interacts with host AP1M1; this interaction plays a role in the mistrafficking and subsequent degradation of host BST2. Interacts with host RANBP2; this interaction allows Vpu to down-regulate host BLM sumoylation. Post-translationally, phosphorylated by host CK2. This phosphorylation is necessary for interaction with human BTRC and degradation of CD4.

It is found in the host membrane. Ion channel activity is inhibited by hexamethylene amiloride in vitro. Enhances virion budding by targeting host CD4 and Tetherin/BST2 to proteasome degradation. Degradation of CD4 prevents any unwanted premature interactions between viral Env and its host receptor CD4 in the endoplasmic reticulum. Degradation of antiretroviral protein Tetherin/BST2 is important for virion budding, as BST2 tethers new viral particles to the host cell membrane. Mechanistically, Vpu bridges either CD4 or BST2 to BTRC, a substrate recognition subunit of the Skp1/Cullin/F-box protein E3 ubiquitin ligase, induces their ubiquitination and subsequent proteasomal degradation. The alteration of the E3 ligase specificity by Vpu seems to promote the degradation of host IKBKB, leading to NF-kappa-B down-regulation and subsequent apoptosis. Acts as a viroporin that forms an oligomeric ion channel in membranes. Modulates the host DNA repair mechanisms to promote degradation of nuclear viral cDNA in cells that are already productively infected in order to suppress immune sensing and proviral hyper-integration (superinfection). Manipulates PML-NBs and modulates SUMOylation of host BLM protein thereby enhancing its DNA-end processing activity toward viral unintegrated linear DNA. Also inhibits RAD52-mediated homologous repair of viral cDNA, preventing the generation of dead-end circular forms of single copies of the long terminal repeat and permitting sustained nucleolytic attack. The sequence is that of Protein Vpu from Human immunodeficiency virus type 1 group M subtype B (isolate HXB2) (HIV-1).